The following is a 1199-amino-acid chain: MENTQKTVTVPTGPLGYVYACRVEDLDLEEISFLAARSTDSDLALLPLMRNLTVEKTFTSSLAVVSGARTTGLAGAGITLKLTTSHFYPSVFVFHGGKHVLPSSAAPNLTRACNAARERFGFSRCQGPPVDGAVETTGAEICTRLGLEPENTILYLVVTALFKEAVFMCNVFLHYGGLDIVHINHGDVIRIPLFPVQLFMPDVNRLVPDPFNTHHRSIGEGFVYPTPFYNTGLCHLIHDCVIAPMAVALRVRNVTAVARGAAHLAFDENHEGAVLPPDITYTYFQSSSSGTTTARGARRNDVNSTSKPSPSGGFERRLASIMAADTALHAEVIFNTGIYEETPTDIKEWPMFIGMEGTLPRLNALGSYTARVAGVIGAMVFSPNSALYLTEVEDSGMTEAKDGGPGPSFNRFYQFAGPHLAANPQTDRDGHVLSSQSTGSSNTEFSVDYLALICGFGAPLLARLLFYLERCDAGAFTGGHGDALKYVTGTFDSEIPCSLCEKHTRPVCAHTTVHRLRQRMPRFGQATRQPIGVFGTMNSQYSDCDPLGNYAPYLILRKPGDQTEAAKATMQDTYRATLERLFIDLEQERLLDRGAPCSSEGLSSVIVDHPTFRRILDTLRARIEQTTTQFMKVLVETRDYKIREGLSEATHSMALTFDPYSGAFCPITNFLVKRTHLAVVQDLALSQCHCVFYGQQVEGRNFRNQFQPVLRRRFVDLFNGGFISTRSITVTLSEGPVSAPNPTLGQDAPAGRTFDGDLARVSVEVIRDIRVKNRVVFSGNCTNLSEAARARLVGLASAYQRQEKRVDMLHGALGFLLKQFHGLLFPRGMPPNSKSPNPQWFWTLLQRNQMPADKLTHEEITTIAAVKRFTEEYAALNFINLPPTCIGELAQFYMANLILKYCDHSQYLINTLTSIITGARRPRDPSSVLHWIRKDVTSAADIETQAKALLEKTENLPELWTTAFTSTHLVRAAMNQRPMVVLGISISKYHGAAGNNRVFQAGNWSGLNGGKNVCPLFTFDRTRRFIITCPRGGFICPVTGPSSGNRETTLSDQVRGIIVSGGAMVQLAIYATVVRAVGARAQHMAFDDWLSLTDDEFLARDLEELHDQIIQTLETPWTVEGALEAVKILDEKTTAGDGETPTNLAFNFDSCEPSHDTTSNVLNISGSTVPGLKRPPEDDELFDLSGIPIKHGNITMEMI.

The tract at residues 289–314 (SGTTTARGARRNDVNSTSKPSPSGGF) is disordered. Residues 497–510 (CSLCEKHTRPVCAH) fold into a zinc finger. Short sequence motifs (required for filament formation) lie at residues 841–842 (FW) and 1146–1148 (FNF). The required for nuclear localization stretch occupies residues 1172–1199 (LKRPPEDDELFDLSGIPIKHGNITMEMI).

Belongs to the herpesviridae major DNA-binding protein family. In terms of assembly, homooligomers. Forms double-helical filaments necessary for the formation of replication compartments within the host nucleus. Interacts with the origin-binding protein. Interacts with the helicase primase complex; this interaction stimulates primer synthesis activity of the helicase-primase complex. Interacts with the DNA polymerase. Interacts with the alkaline exonuclease; this interaction increases its nuclease processivity.

Its subcellular location is the host nucleus. Plays several crucial roles in viral infection. Participates in the opening of the viral DNA origin to initiate replication by interacting with the origin-binding protein. May disrupt loops, hairpins and other secondary structures present on ssDNA to reduce and eliminate pausing of viral DNA polymerase at specific sites during elongation. Promotes viral DNA recombination by performing strand-transfer, characterized by the ability to transfer a DNA strand from a linear duplex to a complementary single-stranded DNA circle. Can also catalyze the renaturation of complementary single strands. Additionally, reorganizes the host cell nucleus, leading to the formation of prereplicative sites and replication compartments. This process is driven by the protein which can form double-helical filaments in the absence of DNA. This chain is Major DNA-binding protein, found in Varicella-zoster virus (strain Oka vaccine) (HHV-3).